A 152-amino-acid chain; its full sequence is Large ribosomal subunit protein bL17 (152 aa).

The disordered stretch occupies residues 121-140 (APSASQKTGKQDRAKRVKGS).

This sequence belongs to the bacterial ribosomal protein bL17 family. Part of the 50S ribosomal subunit. Contacts protein L32.

This chain is Large ribosomal subunit protein bL17, found in Pelodictyon phaeoclathratiforme (strain DSM 5477 / BU-1).